A 107-amino-acid chain; its full sequence is uncharacterized protein (107 aa).

The chain crosses the membrane as a helical span at residues 13–33; sequence VLIVTFLSSFIFIVWLPVALV.

It localises to the membrane. This is an uncharacterized protein from Saccharomyces cerevisiae (strain ATCC 204508 / S288c) (Baker's yeast).